Reading from the N-terminus, the 82-residue chain is RNA-binding protein Hfq (82 aa).

A Sm domain is found at Asp10–Val70.

The protein belongs to the Hfq family. Homohexamer.

Functionally, RNA chaperone that binds small regulatory RNA (sRNAs) and mRNAs to facilitate mRNA translational regulation in response to envelope stress, environmental stress and changes in metabolite concentrations. Also binds with high specificity to tRNAs. This chain is RNA-binding protein Hfq, found in Parvibaculum lavamentivorans (strain DS-1 / DSM 13023 / NCIMB 13966).